The following is a 217-amino-acid chain: ATP synthase subunit 4, mitochondrial (217 aa).

The transit peptide at 1 to 14 directs the protein to the mitochondrion; the sequence is MPFARVGALSARHY. 2 consecutive transmembrane segments (helical) span residues 41–61 and 66–86; these read GVLATGVLGSIYAISNELYIV and IVLGVFAAFVVVVAKLGGPGY.

F-type ATP synthases have 2 components, the catalytic core F(1) and the membrane-embedded component F(0), linked together by a central stalk and a peripheral stalk. The central stalk, also called rotor shaft, is often seen as part of F(1). The peripheral stalk is seen as part of F(0). F(0) contains the membrane channel next to the rotor. F-type ATP synthases form dimers but each monomer functions independently in ATP generation. The dimer consists of 17 different polypeptides: ATP1 (subunit alpha, 3 molecules per monomer, part of F(1)), ATP2 (subunit beta, 3 copies per monomer, part of F(1)), ATP3 (subunit gamma, part of the central stalk), ATP4 (subunit b, part of the peripheral stalk), ATP5/OSCP (subunit 5/OSCP, part of the peripheral stalk), ATP6 (subunit a, part of the peripheral stalk), ATP7 (subunit d, part of the peripheral stalk), ATP8 (subunit 8, part of the peripheral stalk), OLI1 (subunit c, part of the rotor, 10 molecules per monomer), ATP14 (subunit h, part of the peripheral stalk), ATP15 (subunit epsilon, part of the central stalk), ATP16 (subunit delta, part of the central stalk), ATP17 (subunit f, part of the peripheral stalk), ATP18 (subunit i/j, part of the peripheral stalk), ATP19 (subunit k, dimer-specific, at interface between monomers), ATP20 (subunit g, at interface between monomers), TIM11 (subunit e, at interface between monomers).

It is found in the mitochondrion inner membrane. In terms of biological role, mitochondrial membrane ATP synthase (F(1)F(0) ATP synthase or Complex V) produces ATP from ADP in the presence of a proton gradient across the membrane which is generated by electron transport complexes of the respiratory chain. F-type ATP synthases consist of two structural domains, F(1) - containing the extramembraneous catalytic core, and F(0) - containing the membrane proton channel, linked together by a central stalk and a peripheral stalk. During catalysis, ATP synthesis in the catalytic domain of F(1) is coupled via a rotary mechanism of the central stalk subunits to proton translocation. Part of the complex F(0) domain and the peripheral stalk, which acts as a stator to hold the catalytic alpha/ATP1(3)beta/ATP2(3) subcomplex and subunit a/ATP6 static relative to the rotary elements. The chain is ATP synthase subunit 4, mitochondrial from Yarrowia lipolytica (strain CLIB 122 / E 150) (Yeast).